A 425-amino-acid polypeptide reads, in one-letter code: Dihydroorotase (425 aa).

The Zn(2+) site is built by His-61 and His-63. Residues 63 to 65 (HLR) and Asn-95 contribute to the substrate site. Asp-153, His-180, and His-233 together coordinate Zn(2+). Asn-279 contributes to the substrate binding site. A Zn(2+)-binding site is contributed by Asp-306. Asp-306 is an active-site residue. Residue His-310 participates in substrate binding.

This sequence belongs to the metallo-dependent hydrolases superfamily. DHOase family. Class I DHOase subfamily. Zn(2+) serves as cofactor.

The catalysed reaction is (S)-dihydroorotate + H2O = N-carbamoyl-L-aspartate + H(+). It functions in the pathway pyrimidine metabolism; UMP biosynthesis via de novo pathway; (S)-dihydroorotate from bicarbonate: step 3/3. Functionally, catalyzes the reversible cyclization of carbamoyl aspartate to dihydroorotate. This Geotalea daltonii (strain DSM 22248 / JCM 15807 / FRC-32) (Geobacter daltonii) protein is Dihydroorotase.